The primary structure comprises 684 residues: Proprotein convertase subtilisin/kexin type 9 (684 aa).

The first 28 residues, 1–28 (MGTVSSRRLWWPLPLLLLLLLGPPGARA), serve as a signal peptide directing secretion. Positions 29–151 (QEDDDGDYEE…IEEDSSVFAQ (123 aa)) are excised as a propeptide. The residue at position 36 (Tyr36) is a Sulfotyrosine. Ser45 is subject to Phosphoserine. The Inhibitor I9 domain maps to 75–148 (TYVVVLKDSD…VDYIEEDSSV (74 aa)). The region spanning 154 to 460 (PWNLERITPA…GWQLFCRTVW (307 aa)) is the Peptidase S8 domain. Active-site charge relay system residues include Asp185 and His225. 2 disulfides stabilise this stretch: Cys222-Cys254 and Cys322-Cys357. Ser385 (charge relay system) is an active-site residue. The tract at residues 451 to 684 (GWQLFCRTVW…AICCRSRHLA (234 aa)) is C-terminal domain. Disulfide bonds link Cys456–Cys526, Cys476–Cys525, and Cys485–Cys508. Residue Asn532 is glycosylated (N-linked (GlcNAc...) asparagine). 6 disulfides stabilise this stretch: Cys533–Cys600, Cys551–Cys599, Cys561–Cys587, Cys607–Cys678, Cys625–Cys677, and Cys634–Cys653.

The protein belongs to the peptidase S8 family. In terms of assembly, monomer. Can self-associate to form dimers and higher multimers which may have increased LDLR degrading activity. The precursor protein but not the mature protein may form multimers. Interacts with APOB, VLDLR, LRP8/APOER2 and BACE1. The full-length immature form (pro-PCSK9) interacts with SCNN1A, SCNN1B and SCNN1G. The pro-PCSK9 form (via C-terminal domain) interacts with LDLR. Interacts (via the C-terminal domain) with ANXA2 (via repeat Annexin 1); the interaction inhibits the degradation of LDLR. Requires Ca(2+) as cofactor. In terms of processing, cleavage by furin and PCSK5 generates a truncated inactive protein that is unable to induce LDLR degradation. Post-translationally, undergoes autocatalytic cleavage in the endoplasmic reticulum to release the propeptide from the N-terminus and the cleavage of the propeptide is strictly required for its maturation and activation. The cleaved propeptide however remains associated with the catalytic domain through non-covalent interactions, preventing potential substrates from accessing its active site. As a result, it is secreted from cells as a propeptide-containing, enzymatically inactive protein. Phosphorylation protects the propeptide against proteolysis.

It localises to the cytoplasm. It is found in the secreted. The protein localises to the endosome. Its subcellular location is the lysosome. The protein resides in the cell surface. It localises to the endoplasmic reticulum. It is found in the golgi apparatus. With respect to regulation, its proteolytic activity is autoinhibited by the non-covalent binding of the propeptide to the catalytic domain. Inhibited by EGTA. Functionally, crucial player in the regulation of plasma cholesterol homeostasis. Binds to low-density lipid receptor family members: low density lipoprotein receptor (LDLR), very low density lipoprotein receptor (VLDLR), apolipoprotein E receptor (LRP1/APOER) and apolipoprotein receptor 2 (LRP8/APOER2), and promotes their degradation in intracellular acidic compartments. Acts via a non-proteolytic mechanism to enhance the degradation of the hepatic LDLR through a clathrin LDLRAP1/ARH-mediated pathway. May prevent the recycling of LDLR from endosomes to the cell surface or direct it to lysosomes for degradation. Can induce ubiquitination of LDLR leading to its subsequent degradation. Inhibits intracellular degradation of APOB via the autophagosome/lysosome pathway in a LDLR-independent manner. Involved in the disposal of non-acetylated intermediates of BACE1 in the early secretory pathway. Inhibits epithelial Na(+) channel (ENaC)-mediated Na(+) absorption by reducing ENaC surface expression primarily by increasing its proteasomal degradation. Regulates neuronal apoptosis via modulation of LRP8/APOER2 levels and related anti-apoptotic signaling pathways. In Plecturocebus moloch (Dusky titi monkey), this protein is Proprotein convertase subtilisin/kexin type 9 (PCSK9).